The sequence spans 240 residues: UDP-2,3-diacylglucosamine hydrolase (240 aa).

Mn(2+)-binding residues include aspartate 8, histidine 10, aspartate 41, asparagine 78, and histidine 113. Residue 78–79 participates in substrate binding; that stretch reads NR. Positions 121, 159, 163, 166, and 194 each coordinate substrate. Residues histidine 194 and histidine 196 each coordinate Mn(2+).

This sequence belongs to the LpxH family. The cofactor is Mn(2+).

The protein resides in the cell inner membrane. The catalysed reaction is UDP-2-N,3-O-bis[(3R)-3-hydroxytetradecanoyl]-alpha-D-glucosamine + H2O = 2-N,3-O-bis[(3R)-3-hydroxytetradecanoyl]-alpha-D-glucosaminyl 1-phosphate + UMP + 2 H(+). It participates in glycolipid biosynthesis; lipid IV(A) biosynthesis; lipid IV(A) from (3R)-3-hydroxytetradecanoyl-[acyl-carrier-protein] and UDP-N-acetyl-alpha-D-glucosamine: step 4/6. Functionally, hydrolyzes the pyrophosphate bond of UDP-2,3-diacylglucosamine to yield 2,3-diacylglucosamine 1-phosphate (lipid X) and UMP by catalyzing the attack of water at the alpha-P atom. Involved in the biosynthesis of lipid A, a phosphorylated glycolipid that anchors the lipopolysaccharide to the outer membrane of the cell. In Shewanella baltica (strain OS195), this protein is UDP-2,3-diacylglucosamine hydrolase.